Consider the following 417-residue polypeptide: Adrenocortical dysplasia protein homolog (417 aa).

The short motif at 11–13 (PWI) is the PWI element. Ser-25 is subject to Phosphoserine. The interval 156-245 (ESASSSAGLT…SSIDSSQKAQ (90 aa)) is interaction with POT1. Polar residues-rich tracts occupy residues 237–250 (SIDS…NPAS) and 259–292 (SGAS…TSPR). The tract at residues 237 to 309 (SIDSSQKAQE…PCSSTPSSPL (73 aa)) is disordered. Residues 296–309 (PSSTPCSSTPSSPL) are compositionally biased toward low complexity. A phosphoserine mark is found at Ser-313 and Ser-317. A Glycyl lysine isopeptide (Lys-Gly) (interchain with G-Cter in SUMO2) cross-link involves residue Lys-348.

In terms of assembly, component of the shelterin complex (telosome) composed of TERF1, TERF2, TINF2, TERF2IP ACD and POT1. Forms heterodimers with POT1. Identified in a complex with POT1 and single-stranded telomeric DNA. Interacts with STN1 and TINF2.

It localises to the nucleus. It is found in the chromosome. The protein localises to the telomere. Component of the shelterin complex (telosome) that is involved in the regulation of telomere length and protection. Shelterin associates with arrays of double-stranded TTAGGG repeats added by telomerase and protects chromosome ends. Without its protective activity, telomeres are no longer hidden from the DNA damage surveillance and chromosome ends are inappropriately processed by DNA repair pathways. Promotes binding of POT1 to single-stranded telomeric DNA. Modulates the inhibitory effects of POT1 on telomere elongation. The ACD-POT1 heterodimer enhances telomere elongation by recruiting telomerase to telomeres and increasing its processivity. May play a role in organogenesis. This chain is Adrenocortical dysplasia protein homolog, found in Rattus norvegicus (Rat).